The following is a 60-amino-acid chain: uncharacterized protein (60 aa).

This is an uncharacterized protein from Bacillus subtilis (strain 168).